Here is a 1712-residue protein sequence, read N- to C-terminus: Latent-transforming growth factor beta-binding protein 1 (1712 aa).

The signal sequence occupies residues 1 to 20 (MAGAWLRWGLLLWAGLLAWS). The disordered stretch occupies residues 63–148 (SSTATSSRSL…QDTQSSGGSR (86 aa)). Positions 136-147 (KVQQDTQSSGGS) are enriched in polar residues. The region spanning 181 to 213 (TKPSCVPPCQNGGMCLRPQFCVCKPGTKGKACE) is the EGF-like 1 domain. 3 cysteine pairs are disulfide-bonded: Cys185–Cys195, Cys189–Cys201, and Cys203–Cys212. 2 N-linked (GlcNAc...) asparagine glycosylation sites follow: Asn339 and Asn370. The region spanning 391 to 423 (RVVICHLPCMNGGQCSSRDKCQCPPNFTGKLCQ) is the EGF-like 2 domain. Intrachain disulfides connect Cys395–Cys405, Cys399–Cys411, Cys413–Cys422, Cys551–Cys573, Cys560–Cys586, and Cys574–Cys589. N-linked (GlcNAc...) asparagine glycosylation occurs at Asn416. The TB 1 domain maps to 549 to 601 (GRCFQETIGSQCGKALPGLSKQEDCCGTVGTSWGFNKCQKCPKKQSYHGYTQM). A glycan (N-linked (GlcNAc...) asparagine) is linked at Asn612. The 41-residue stretch at 618 to 658 (DINECQLQGVCPNGECLNTMGSYRCSCKMGFGPDPTFSSCV) folds into the EGF-like 3; calcium-binding domain. Cystine bridges form between Cys622-Cys633, Cys628-Cys642, Cys644-Cys657, Cys671-Cys694, Cys681-Cys706, Cys695-Cys709, and Cys696-Cys721. Ser639 is a glycosylation site (O-linked (Glc) serine). The 53-residue stretch at 669–721 (GPCYRLVSPGRQCMHPLSVHLTKQICCCSVGKAWGPQCEKCPLPGTAAFKEIC) folds into the TB 2 domain. The segment at 752–803 (KNTQPVAKSTHPPPLPAKEEPVEALTSSREHGPGVAEPEVVTAPPEKEIPSL) is disordered. Thr761 and Thr793 each carry an O-linked (GalNAc...) threonine glycan. The EGF-like 4; calcium-binding domain maps to 865-906 (EINECTVNPDICGAGHCINLPVRYTCICYEGYKFSEQQRKCI). Intrachain disulfides connect Cys869–Cys881, Cys876–Cys890, Cys892–Cys905, Cys911–Cys923, Cys918–Cys932, Cys934–Cys947, Cys953–Cys964, Cys959–Cys973, Cys976–Cys988, Cys994–Cys1005, Cys1000–Cys1014, Cys1017–Cys1028, Cys1034–Cys1045, Cys1040–Cys1054, Cys1056–Cys1069, Cys1075–Cys1086, Cys1081–Cys1095, Cys1097–Cys1110, Cys1116–Cys1127, Cys1122–Cys1136, Cys1138–Cys1151, Cys1157–Cys1169, Cys1164–Cys1178, Cys1180–Cys1192, Cys1198–Cys1210, Cys1204–Cys1219, Cys1221–Cys1234, Cys1240–Cys1252, Cys1246–Cys1261, Cys1263–Cys1276, Cys1282–Cys1294, Cys1289–Cys1303, Cys1305–Cys1319, Cys1340–Cys1363, Cys1350–Cys1375, Cys1364–Cys1380, and Cys1365–Cys1392. The 42-residue stretch at 907–948 (DIDECAQAQHLCSQGRCENTEGSFLCICPAGFIASEEGSNCI) folds into the EGF-like 5; calcium-binding domain. A glycan (O-linked (Glc) serine) is linked at Ser929. The EGF-like 6; calcium-binding domain maps to 949-989 (DVDECLRPDVCRDGRCINTAGAFRCEYCDSGYRMSRRGHCE). The residue at position 966 (Asn966) is a (3R)-3-hydroxyasparagine. An EGF-like 7; calcium-binding domain is found at 990-1029 (DIDECLTPSTCPEEQCVNSPGSYQCVPCTEGFRGWNGQCL). Ser1011 carries O-linked (Glc) serine glycosylation. Residues 1030 to 1070 (DVDECLQPKVCTNGSCTNLEGSYMCSCHKGYSPTPDHRHCQ) form the EGF-like 8; calcium-binding domain. Asn1042 is a glycosylation site (N-linked (GlcNAc...) asparagine). O-linked (Glc) serine glycosylation occurs at Ser1051. Residues 1071 to 1111 (DIDECQQGNLCMNGQCKNTDGSFRCTCGQGYQLSAAKDQCE) form the EGF-like 9; calcium-binding domain. The EGF-like 10; calcium-binding domain maps to 1112 to 1152 (DIDECEHRHLCSHGQCRNTEGSFQCLCNQGYRASVLGDHCE). The residue at position 1129 (Asn1129) is a (3R)-3-hydroxyasparagine. The O-linked (Glc) serine glycan is linked to Ser1133. The region spanning 1153–1193 (DINECLEDSSVCQGGDCINTAGSYDCTCPDGLQLNDNKGCQ) is the EGF-like 11; calcium-binding domain. In terms of domain architecture, EGF-like 12; calcium-binding spans 1194–1235 (DINECAQPGLCAPHGECLNTQGSFHCVCEQGFSISADGRTCE). Residue Ser1216 is glycosylated (O-linked (Glc) serine). Positions 1236–1277 (DIDECVNNTVCDSHGFCDNTAGSFRCLCYQGFQAPQDGQGCV) constitute an EGF-like 13; calcium-binding domain. Asn1242 is a glycosylation site (N-linked (GlcNAc...) asparagine). The EGF-like 14; calcium-binding domain occupies 1278-1320 (DVNECELLSGVCGEAFCENVEGSFLCVCADENQEYSPMTGQCR). Residues 1335 to 1402 (EEKKECYYNL…PRGKGFVPAG (68 aa)) form an 8-Cys3 region region. Residues 1338-1392 (KECYYNLNDASLCDNVLAPNVTKQECCCTSGAGWGDNCEIFPCPVQGTAEFSEMC) form the TB 3 domain. Asn1357 carries N-linked (GlcNAc...) asparagine glycosylation. Ser1405 is subject to Phosphoserine. In terms of domain architecture, EGF-like 15; calcium-binding spans 1415 to 1457 (DADECLLFGEEICKNGYCLNTQPGYECYCKEGTYYDPVKLQCF). 10 disulfides stabilise this stretch: Cys1419–Cys1432, Cys1427–Cys1441, Cys1443–Cys1456, Cys1462–Cys1473, Cys1468–Cys1482, Cys1484–Cys1497, Cys1517–Cys1541, Cys1527–Cys1553, Cys1542–Cys1556, and Cys1543–Cys1568. In terms of domain architecture, EGF-like 16; calcium-binding spans 1458–1498 (DMDECQDPNSCIDGQCVNTEGSYNCFCTHPMVLDASEKRCV). The O-linked (Glc) serine glycan is linked to Ser1479. Positions 1498–1712 (VQPTESNEQI…LNLDKDSDLE (215 aa)) are C-terminal domain. In terms of domain architecture, TB 4 spans 1515 to 1568 (DLCWEHLSEEYVCSRPLVGKQTTYTECCCLYGEAWGMQCALCPMKDSDDYAQLC). 2 positions are modified to phosphoserine: Ser1588 and Ser1607. The EGF-like 17 domain maps to 1612 to 1652 (QAEECGILNGCENGRCVRVQEGYTCDCFDGYHLDMAKMTCV). Cystine bridges form between Cys1616/Cys1627, Cys1622/Cys1636, Cys1638/Cys1651, Cys1657/Cys1672, Cys1667/Cys1681, and Cys1683/Cys1696. The region spanning 1653-1697 (DVNECSELNNRMSLCKNAKCINTEGSYKCVCLPGYVPSDKPNYCT) is the EGF-like 18; calcium-binding domain. The O-linked (Glc) serine glycan is linked to Ser1678.

The protein belongs to the LTBP family. In terms of assembly, interacts with TGFB1; associates via disulfide bonds with the Latency-associated peptide chain (LAP) regulatory chain of TGFB1, leading to regulate activation of TGF-beta-1. LTBP1 does not bind directly to TGF-beta-1, the active chain of TGFB1. Interacts (via C-terminal domain) with FBN1 (via N-terminal domain). Interacts with FBN2. Interacts with ADAMTSL2. Interacts with EFEMP2. Contains hydroxylated asparagine residues. In terms of processing, two intrachain disulfide bonds from the TB3 domain are rearranged upon TGFB1 binding, and form interchain bonds with TGFB1 propeptide, anchoring it to the extracellular matrix. Post-translationally, O-glycosylated on serine residues by POGLUT2 and POGLUT3.

The protein localises to the secreted. The protein resides in the extracellular space. Its subcellular location is the extracellular matrix. Key regulator of transforming growth factor beta (TGFB1, TGFB2 and TGFB3) that controls TGF-beta activation by maintaining it in a latent state during storage in extracellular space. Associates specifically via disulfide bonds with the Latency-associated peptide (LAP), which is the regulatory chain of TGF-beta, and regulates integrin-dependent activation of TGF-beta. Outcompeted by LRRC32/GARP for binding to LAP regulatory chain of TGF-beta. This chain is Latent-transforming growth factor beta-binding protein 1 (Ltbp1), found in Rattus norvegicus (Rat).